A 491-amino-acid chain; its full sequence is Glycogen synthase 1 (491 aa).

Lysine 15 contributes to the ADP-alpha-D-glucose binding site.

This sequence belongs to the glycosyltransferase 1 family. Bacterial/plant glycogen synthase subfamily.

It carries out the reaction [(1-&gt;4)-alpha-D-glucosyl](n) + ADP-alpha-D-glucose = [(1-&gt;4)-alpha-D-glucosyl](n+1) + ADP + H(+). It functions in the pathway glycan biosynthesis; glycogen biosynthesis. Its function is as follows. Synthesizes alpha-1,4-glucan chains using ADP-glucose. This Synechococcus sp. (strain JA-3-3Ab) (Cyanobacteria bacterium Yellowstone A-Prime) protein is Glycogen synthase 1.